Reading from the N-terminus, the 507-residue chain is ATP synthase subunit alpha (507 aa).

Residue glycine 170–threonine 177 participates in ATP binding.

This sequence belongs to the ATPase alpha/beta chains family. As to quaternary structure, F-type ATPases have 2 components, CF(1) - the catalytic core - and CF(0) - the membrane proton channel. CF(1) has five subunits: alpha(3), beta(3), gamma(1), delta(1), epsilon(1). CF(0) has three main subunits: a(1), b(2) and c(9-12). The alpha and beta chains form an alternating ring which encloses part of the gamma chain. CF(1) is attached to CF(0) by a central stalk formed by the gamma and epsilon chains, while a peripheral stalk is formed by the delta and b chains.

The protein localises to the cell inner membrane. It carries out the reaction ATP + H2O + 4 H(+)(in) = ADP + phosphate + 5 H(+)(out). In terms of biological role, produces ATP from ADP in the presence of a proton gradient across the membrane. The alpha chain is a regulatory subunit. The chain is ATP synthase subunit alpha from Anaplasma marginale (strain Florida).